A 502-amino-acid polypeptide reads, in one-letter code: Cytochrome P450 2J2 (502 aa).

Residue Cys448 coordinates heme.

The protein belongs to the cytochrome P450 family. Requires heme as cofactor. In terms of tissue distribution, highly expressed in heart, present at lower levels in liver, kidney and skeletal muscle (at protein level).

Its subcellular location is the endoplasmic reticulum membrane. It localises to the microsome membrane. The catalysed reaction is (5Z,8Z,11Z,14Z)-eicosatetraenoate + reduced [NADPH--hemoprotein reductase] + O2 = 5,6-epoxy-(8Z,11Z,14Z)-eicosatrienoate + oxidized [NADPH--hemoprotein reductase] + H2O + H(+). It catalyses the reaction (5Z,8Z,11Z,14Z)-eicosatetraenoate + reduced [NADPH--hemoprotein reductase] + O2 = (8R,9S)-epoxy-(5Z,11Z,14Z)-eicosatrienoate + oxidized [NADPH--hemoprotein reductase] + H2O + H(+). It carries out the reaction (5Z,8Z,11Z,14Z)-eicosatetraenoate + reduced [NADPH--hemoprotein reductase] + O2 = (8S,9R)-epoxy-(5Z,11Z,14Z)-eicosatrienoate + oxidized [NADPH--hemoprotein reductase] + H2O + H(+). The enzyme catalyses (5Z,8Z,11Z,14Z)-eicosatetraenoate + reduced [NADPH--hemoprotein reductase] + O2 = (11R,12S)-epoxy-(5Z,8Z,14Z)-eicosatrienoate + oxidized [NADPH--hemoprotein reductase] + H2O + H(+). The catalysed reaction is (5Z,8Z,11Z,14Z)-eicosatetraenoate + reduced [NADPH--hemoprotein reductase] + O2 = (11S,12R)-epoxy-(5Z,8Z,14Z)-eicosatrienoate + oxidized [NADPH--hemoprotein reductase] + H2O + H(+). It catalyses the reaction (5Z,8Z,11Z,14Z)-eicosatetraenoate + reduced [NADPH--hemoprotein reductase] + O2 = (14R,15S)-epoxy-(5Z,8Z,11Z)-eicosatrienoate + oxidized [NADPH--hemoprotein reductase] + H2O + H(+). It carries out the reaction (5Z,8Z,11Z,14Z)-eicosatetraenoate + reduced [NADPH--hemoprotein reductase] + O2 = (14S,15R)-epoxy-(5Z,8Z,11Z)-eicosatrienoate + oxidized [NADPH--hemoprotein reductase] + H2O + H(+). The enzyme catalyses (15S)-hydroperoxy-(5Z,8Z,11Z,13E)-eicosatetraenoate = (13S)-hydroxy-(14S,15S)-epoxy-(5Z,8Z,11Z)-eicosatrienoate. The catalysed reaction is (15S)-hydroperoxy-(5Z,8Z,11Z,13E)-eicosatetraenoate = (13R)-hydroxy-(14S,15S)-epoxy-(5Z,8Z,11Z)-eicosatrienoate. It catalyses the reaction (5Z,8Z,11Z,14Z,17Z)-eicosapentaenoate + reduced [NADPH--hemoprotein reductase] + O2 = (17R,18S)-epoxy-(5Z,8Z,11Z,14Z)-eicosatetraenoate + oxidized [NADPH--hemoprotein reductase] + H2O + H(+). It carries out the reaction (5Z,8Z,11Z,14Z,17Z)-eicosapentaenoate + reduced [NADPH--hemoprotein reductase] + O2 = (17S,18R)-epoxy-(5Z,8Z,11Z,14Z)-eicosatetraenoate + oxidized [NADPH--hemoprotein reductase] + H2O + H(+). The enzyme catalyses (4Z,7Z,10Z,13Z,16Z,19Z)-docosahexaenoate + reduced [NADPH--hemoprotein reductase] + O2 = (19R,20S)-epoxy-(4Z,7Z,10Z,13Z,16Z)-docosapentaenoate + oxidized [NADPH--hemoprotein reductase] + H2O + H(+). The catalysed reaction is (4Z,7Z,10Z,13Z,16Z,19Z)-docosahexaenoate + reduced [NADPH--hemoprotein reductase] + O2 = (19S,20R)-epoxy-(4Z,7Z,10Z,13Z,16Z)-docosapentaenoate + oxidized [NADPH--hemoprotein reductase] + H2O + H(+). It catalyses the reaction albendazole + reduced [NADPH--hemoprotein reductase] + O2 = hydroxyalbendazole + oxidized [NADPH--hemoprotein reductase] + H2O + H(+). It carries out the reaction albendazole + reduced [NADPH--hemoprotein reductase] + O2 = albendazole S-oxide + oxidized [NADPH--hemoprotein reductase] + H2O + H(+). The enzyme catalyses fenbendazole + reduced [NADPH--hemoprotein reductase] + O2 = fenbendazole S-oxide + oxidized [NADPH--hemoprotein reductase] + H2O + H(+). It functions in the pathway lipid metabolism; arachidonate metabolism. In terms of biological role, a cytochrome P450 monooxygenase involved in the metabolism of polyunsaturated fatty acids (PUFA) in the cardiovascular system. Mechanistically, uses molecular oxygen inserting one oxygen atom into a substrate, and reducing the second into a water molecule, with two electrons provided by NADPH via cytochrome P450 reductase (NADPH--hemoprotein reductase). Catalyzes the epoxidation of double bonds of PUFA. Converts arachidonic acid to four regioisomeric epoxyeicosatrienoic acids (EpETrE), likely playing a major role in the epoxidation of endogenous cardiac arachidonic acid pools. In endothelial cells, participates in eicosanoids metabolism by converting hydroperoxide species into hydroxy epoxy metabolites. In combination with 15-lipoxygenase metabolizes arachidonic acid and converts hydroperoxyicosatetraenoates (HpETEs) into hydroxy epoxy eicosatrienoates (HEETs), which are precursors of vasodilatory trihydroxyicosatrienoic acids (THETAs). This hydroperoxide isomerase activity is NADPH- and O2-independent. Catalyzes the monooxygenation of a various xenobiotics, such as danazol, amiodarone, terfenadine, astemizole, thioridazine, tamoxifen, cyclosporin A and nabumetone. Catalyzes hydroxylation of the anthelmintics albendazole and fenbendazole. Catalyzes the sulfoxidation of fenbedazole. The protein is Cytochrome P450 2J2 of Homo sapiens (Human).